We begin with the raw amino-acid sequence, 581 residues long: Adenine deaminase (581 aa).

The protein belongs to the metallo-dependent hydrolases superfamily. Adenine deaminase family. Mn(2+) is required as a cofactor.

The enzyme catalyses adenine + H2O + H(+) = hypoxanthine + NH4(+). The sequence is that of Adenine deaminase from Brucella suis biovar 1 (strain 1330).